The sequence spans 80 residues: Exodeoxyribonuclease 7 small subunit (80 aa).

The protein belongs to the XseB family. Heterooligomer composed of large and small subunits.

Its subcellular location is the cytoplasm. The enzyme catalyses Exonucleolytic cleavage in either 5'- to 3'- or 3'- to 5'-direction to yield nucleoside 5'-phosphates.. Functionally, bidirectionally degrades single-stranded DNA into large acid-insoluble oligonucleotides, which are then degraded further into small acid-soluble oligonucleotides. In Pseudomonas putida (strain ATCC 700007 / DSM 6899 / JCM 31910 / BCRC 17059 / LMG 24140 / F1), this protein is Exodeoxyribonuclease 7 small subunit.